A 338-amino-acid chain; its full sequence is Uroporphyrinogen decarboxylase (338 aa).

Residues 27 to 31 (RQAGR), Asp-77, Tyr-151, Ser-203, and His-317 each bind substrate.

This sequence belongs to the uroporphyrinogen decarboxylase family. As to quaternary structure, homodimer.

The protein resides in the cytoplasm. It catalyses the reaction uroporphyrinogen III + 4 H(+) = coproporphyrinogen III + 4 CO2. Its pathway is porphyrin-containing compound metabolism; protoporphyrin-IX biosynthesis; coproporphyrinogen-III from 5-aminolevulinate: step 4/4. Catalyzes the decarboxylation of four acetate groups of uroporphyrinogen-III to yield coproporphyrinogen-III. This is Uroporphyrinogen decarboxylase from Wolbachia pipientis wMel.